The following is a 133-amino-acid chain: Putative biopolymer transport protein ExbD-like 1 (133 aa).

Residues 1-15 (MNYDNYWDEDKPELN) lie on the Cytoplasmic side of the membrane. The chain crosses the membrane as a helical span at residues 16–32 (ITPLVDVMLVLLAILMV). Topologically, residues 33-133 (TTPTLTYKEE…FLKVSLITSP (101 aa)) are periplasmic.

It belongs to the ExbD/TolR family.

Its subcellular location is the cell inner membrane. The chain is Putative biopolymer transport protein ExbD-like 1 from Helicobacter pylori (strain J99 / ATCC 700824) (Campylobacter pylori J99).